Reading from the N-terminus, the 120-residue chain is Ribosome-binding factor A (120 aa).

Belongs to the RbfA family. In terms of assembly, monomer. Binds 30S ribosomal subunits, but not 50S ribosomal subunits or 70S ribosomes.

The protein resides in the cytoplasm. In terms of biological role, one of several proteins that assist in the late maturation steps of the functional core of the 30S ribosomal subunit. Associates with free 30S ribosomal subunits (but not with 30S subunits that are part of 70S ribosomes or polysomes). Required for efficient processing of 16S rRNA. May interact with the 5'-terminal helix region of 16S rRNA. This Chlamydia caviae (strain ATCC VR-813 / DSM 19441 / 03DC25 / GPIC) (Chlamydophila caviae) protein is Ribosome-binding factor A.